Consider the following 265-residue polypeptide: Mlc titration factor A (265 aa).

Residues His-111, His-148, His-152, and Glu-211 each coordinate Zn(2+).

The protein belongs to the MtfA family. Interacts with Mlc. Requires Zn(2+) as cofactor.

It localises to the cytoplasm. Its function is as follows. Involved in the modulation of the activity of the glucose-phosphotransferase system (glucose-PTS). Interacts with the transcriptional repressor Mlc, preventing its interaction with DNA and leading to the modulation of expression of genes regulated by Mlc, including ptsG, which encodes the PTS system glucose-specific EIICB component. Shows zinc-dependent metallopeptidase activity. This is Mlc titration factor A from Escherichia coli O7:K1 (strain IAI39 / ExPEC).